The following is a 279-amino-acid chain: 1-(5-phosphoribosyl)-5-[(5-phosphoribosylamino)methylideneamino] imidazole-4-carboxamide isomerase (279 aa).

It belongs to the HisA/HisF family.

It is found in the cytoplasm. The enzyme catalyses 1-(5-phospho-beta-D-ribosyl)-5-[(5-phospho-beta-D-ribosylamino)methylideneamino]imidazole-4-carboxamide = 5-[(5-phospho-1-deoxy-D-ribulos-1-ylimino)methylamino]-1-(5-phospho-beta-D-ribosyl)imidazole-4-carboxamide. It participates in amino-acid biosynthesis; L-histidine biosynthesis; L-histidine from 5-phospho-alpha-D-ribose 1-diphosphate: step 4/9. This chain is 1-(5-phosphoribosyl)-5-[(5-phosphoribosylamino)methylideneamino] imidazole-4-carboxamide isomerase (HIS6), found in Candida albicans (Yeast).